Reading from the N-terminus, the 313-residue chain is Arabinooligosaccharides transport system permease protein AraP (313 aa).

Transmembrane regions (helical) follow at residues 39 to 59, 91 to 111, 126 to 146, 176 to 196, 224 to 244, and 281 to 301; these read FVLS…IMSF, LEYT…LAIF, ALFI…RLIF, MFLM…LYFL, ITLP…IIGG, and MGYG…VSLI. The ABC transmembrane type-1 domain maps to 87–302; the sequence is LWNTLEYTFW…IVILVVSLIS (216 aa).

It belongs to the binding-protein-dependent transport system permease family. MalFG subfamily. In terms of assembly, the complex is composed of two ATP-binding proteins (MsmX), two transmembrane proteins (AraP and AraQ) and a solute-binding protein (AraN).

The protein resides in the cell membrane. Part of the ABC transporter complex AraNPQ involved in the uptake of arabinooligosaccharides. Transports alpha-1,5-arabinooligosaccharides, at least up to four L-arabinosyl units. Responsible for the translocation of the substrate across the membrane. This Bacillus subtilis (strain 168) protein is Arabinooligosaccharides transport system permease protein AraP.